A 554-amino-acid polypeptide reads, in one-letter code: (+)-delta-cadinene synthase isozyme XC1 (554 aa).

The segment covering 1–16 has biased composition (low complexity); that stretch reads MASQVSQMPSSSPLSS. The tract at residues 1–23 is disordered; it reads MASQVSQMPSSSPLSSNKDEMRP. Mg(2+)-binding residues include aspartate 307, aspartate 311, aspartate 451, and glutamate 455. The DDXXD motif signature appears at 307-311; the sequence is DDTYD.

It belongs to the terpene synthase family. The cofactor is Mg(2+).

The catalysed reaction is (2E,6E)-farnesyl diphosphate = (1S,8aR)-delta-cadinene + diphosphate. The protein operates within secondary metabolite biosynthesis; terpenoid biosynthesis. Its function is as follows. Responsible for the cyclization of trans,trans-farnesyl diphosphate (FPP) to (+)-delta cadinene. This is (+)-delta-cadinene synthase isozyme XC1 from Gossypium arboreum (Tree cotton).